The primary structure comprises 479 residues: Phosphatidylinositol 4-kinase type 2-beta (479 aa).

Positions 1-10 (MESGSEEPDE) are enriched in acidic residues. The disordered stretch occupies residues 1–91 (MESGSEEPDE…PRVGAGHTGH (91 aa)). The span at 18–34 (PALHAGPPAGRAAPGGA) shows a compositional bias: low complexity. Acidic residues predominate over residues 42–62 (GLEEEEEGEEDSGPEGDGEEE). Residues 118–449 (GVLPERISQG…VQMPRVIVER (332 aa)) enclose the PI3K/PI4K catalytic domain. Positions 124-130 (ISQGSSG) are G-loop. ATP-binding residues include serine 131 and lysine 146. The important for substrate binding stretch occupies residues 151 to 153 (EPY). Positions 159 to 172 (KWTKYFHKICCPCC) are important for interaction with membranes. Residues 255-258 (QLFV) and 269-270 (RK) contribute to the ATP site. Residues 262 to 270 (KEADYWLRK) form an important for interaction with membranes region. The tract at residues 299–307 (RNTDRGNDN) is catalytic loop. The activation loop stretch occupies residues 340 to 360 (AIDNGLAFPFKHPDEWRAYPF). Residue aspartate 342 participates in ATP binding. Positions 355 to 364 (WRAYPFHWAW) are important for interaction with membranes.

Belongs to the PI3/PI4-kinase family. Type II PI4K subfamily.

It is found in the cytoplasm. The protein localises to the cytosol. The protein resides in the golgi apparatus membrane. It localises to the endoplasmic reticulum membrane. Its subcellular location is the cell membrane. It is found in the early endosome membrane. The enzyme catalyses a 1,2-diacyl-sn-glycero-3-phospho-(1D-myo-inositol) + ATP = a 1,2-diacyl-sn-glycero-3-phospho-(1D-myo-inositol 4-phosphate) + ADP + H(+). Functionally, contributes to the overall PI4-kinase activity of the cell. This contribution may be especially significant in plasma membrane, endosomal and Golgi compartments. The phosphorylation of phosphatidylinositol (PI) to PI4P is the first committed step in the generation of phosphatidylinositol 4,5-bisphosphate (PIP2), a precursor of the second messenger inositol 1,4,5-trisphosphate (InsP3). The sequence is that of Phosphatidylinositol 4-kinase type 2-beta (PI4K2B) from Gallus gallus (Chicken).